The primary structure comprises 177 residues: Acireductone dioxygenase (177 aa).

Fe(2+)-binding residues include His99, His101, Glu105, and His143. The Ni(2+) site is built by His99, His101, Glu105, and His143.

It belongs to the acireductone dioxygenase (ARD) family. In terms of assembly, monomer. Requires Fe(2+) as cofactor. Ni(2+) is required as a cofactor.

The enzyme catalyses 1,2-dihydroxy-5-(methylsulfanyl)pent-1-en-3-one + O2 = 3-(methylsulfanyl)propanoate + CO + formate + 2 H(+). The catalysed reaction is 1,2-dihydroxy-5-(methylsulfanyl)pent-1-en-3-one + O2 = 4-methylsulfanyl-2-oxobutanoate + formate + 2 H(+). The protein operates within amino-acid biosynthesis; L-methionine biosynthesis via salvage pathway; L-methionine from S-methyl-5-thio-alpha-D-ribose 1-phosphate: step 5/6. Catalyzes 2 different reactions between oxygen and the acireductone 1,2-dihydroxy-3-keto-5-methylthiopentene (DHK-MTPene) depending upon the metal bound in the active site. Fe-containing acireductone dioxygenase (Fe-ARD) produces formate and 2-keto-4-methylthiobutyrate (KMTB), the alpha-ketoacid precursor of methionine in the methionine recycle pathway. Ni-containing acireductone dioxygenase (Ni-ARD) produces methylthiopropionate, carbon monoxide and formate, and does not lie on the methionine recycle pathway. The polypeptide is Acireductone dioxygenase (Leptospira borgpetersenii serovar Hardjo-bovis (strain L550)).